The primary structure comprises 197 residues: ATP-dependent Clp protease proteolytic subunit 1 (197 aa).

Residue histidine 126 is part of the active site.

Belongs to the peptidase S14 family. In terms of assembly, fourteen ClpP subunits assemble into 2 heptameric rings which stack back to back to give a disk-like structure with a central cavity, resembling the structure of eukaryotic proteasomes.

Its subcellular location is the cytoplasm. It carries out the reaction Hydrolysis of proteins to small peptides in the presence of ATP and magnesium. alpha-casein is the usual test substrate. In the absence of ATP, only oligopeptides shorter than five residues are hydrolyzed (such as succinyl-Leu-Tyr-|-NHMec, and Leu-Tyr-Leu-|-Tyr-Trp, in which cleavage of the -Tyr-|-Leu- and -Tyr-|-Trp bonds also occurs).. Its function is as follows. Cleaves peptides in various proteins in a process that requires ATP hydrolysis. Has a chymotrypsin-like activity. Plays a major role in the degradation of misfolded proteins. The chain is ATP-dependent Clp protease proteolytic subunit 1 from Nocardia farcinica (strain IFM 10152).